Reading from the N-terminus, the 176-residue chain is Ribonuclease mitogillin (176 aa).

Residues 1–27 form the signal peptide; the sequence is MVAIKNLFLLAATAVSVLAAPSPLDAR. Disulfide bonds link C32–C174 and C102–C158. H76 is a catalytic residue. E122 functions as the Proton acceptor in the catalytic mechanism. The Proton donor role is filled by H163.

It belongs to the ribonuclease U2 family.

It is found in the secreted. This purine-specific ribonuclease cleaves 28S RNA in eukaryotic ribosomes, inhibits protein synthesis, and shows antitumor activity. This is Ribonuclease mitogillin (mitF) from Aspergillus fumigatus (strain ATCC MYA-4609 / CBS 101355 / FGSC A1100 / Af293) (Neosartorya fumigata).